The sequence spans 201 residues: Lipopolysaccharide core heptose(II)-phosphate phosphatase (201 aa).

An N-terminal signal peptide occupies residues M1–S35.

Belongs to the phosphoglycerate mutase family. Ais subfamily.

It localises to the periplasm. The protein operates within bacterial outer membrane biogenesis; lipopolysaccharide metabolism. In terms of biological role, catalyzes the dephosphorylation of heptose(II) of the outer membrane lipopolysaccharide core. This Salmonella arizonae (strain ATCC BAA-731 / CDC346-86 / RSK2980) protein is Lipopolysaccharide core heptose(II)-phosphate phosphatase.